A 417-amino-acid polypeptide reads, in one-letter code: NADH-quinone oxidoreductase subunit D (417 aa).

This sequence belongs to the complex I 49 kDa subunit family. NDH-1 is composed of 14 different subunits. Subunits NuoB, C, D, E, F, and G constitute the peripheral sector of the complex.

Its subcellular location is the cell inner membrane. The enzyme catalyses a quinone + NADH + 5 H(+)(in) = a quinol + NAD(+) + 4 H(+)(out). Functionally, NDH-1 shuttles electrons from NADH, via FMN and iron-sulfur (Fe-S) centers, to quinones in the respiratory chain. The immediate electron acceptor for the enzyme in this species is believed to be ubiquinone. Couples the redox reaction to proton translocation (for every two electrons transferred, four hydrogen ions are translocated across the cytoplasmic membrane), and thus conserves the redox energy in a proton gradient. This is NADH-quinone oxidoreductase subunit D from Verminephrobacter eiseniae (strain EF01-2).